Reading from the N-terminus, the 137-residue chain is Nucleoside diphosphate kinase (137 aa).

The ATP site is built by Lys-9, Phe-57, Arg-85, Thr-91, Arg-102, and Asn-112. Residue His-115 is the Pros-phosphohistidine intermediate of the active site.

The protein belongs to the NDK family. Homotetramer. Requires Mg(2+) as cofactor.

Its subcellular location is the cytoplasm. It carries out the reaction a 2'-deoxyribonucleoside 5'-diphosphate + ATP = a 2'-deoxyribonucleoside 5'-triphosphate + ADP. The catalysed reaction is a ribonucleoside 5'-diphosphate + ATP = a ribonucleoside 5'-triphosphate + ADP. Its function is as follows. Major role in the synthesis of nucleoside triphosphates other than ATP. The ATP gamma phosphate is transferred to the NDP beta phosphate via a ping-pong mechanism, using a phosphorylated active-site intermediate. This chain is Nucleoside diphosphate kinase, found in Thermus thermophilus (strain ATCC 27634 / DSM 579 / HB8).